A 43-amino-acid polypeptide reads, in one-letter code: Protein PsbN (43 aa).

Residues 4–24 (AIVLIISVGAALVAVTGYGIY) form a helical membrane-spanning segment.

This sequence belongs to the PsbN family.

The protein localises to the cellular thylakoid membrane. May play a role in photosystem I and II biogenesis. In Trichormus variabilis (strain ATCC 29413 / PCC 7937) (Anabaena variabilis), this protein is Protein PsbN.